The following is an 88-amino-acid chain: UPF0297 protein SGO_2042 (88 aa).

The protein belongs to the UPF0297 family.

This chain is UPF0297 protein SGO_2042, found in Streptococcus gordonii (strain Challis / ATCC 35105 / BCRC 15272 / CH1 / DL1 / V288).